A 326-amino-acid chain; its full sequence is Ribosomal large subunit pseudouridine synthase D (326 aa).

One can recognise an S4 RNA-binding domain in the interval 18 to 91 (QRLDQALAEM…IPLDIVYEDD (74 aa)). Asp-139 is a catalytic residue. The segment at 183 to 203 (GTVNEPISRHPTKRTHMSVHP) is disordered.

It belongs to the pseudouridine synthase RluA family.

Its subcellular location is the cytoplasm. It catalyses the reaction uridine(1911/1915/1917) in 23S rRNA = pseudouridine(1911/1915/1917) in 23S rRNA. Its function is as follows. Responsible for synthesis of pseudouridine from uracil at positions 1911, 1915 and 1917 in 23S ribosomal RNA. The chain is Ribosomal large subunit pseudouridine synthase D (rluD) from Salmonella typhi.